Consider the following 138-residue polypeptide: Nucleoside diphosphate kinase (138 aa).

Residues K10, F58, R86, T92, R103, and N113 each contribute to the ATP site. The active-site Pros-phosphohistidine intermediate is the H116.

This sequence belongs to the NDK family. Homotetramer. Requires Mg(2+) as cofactor.

It localises to the cytoplasm. It carries out the reaction a 2'-deoxyribonucleoside 5'-diphosphate + ATP = a 2'-deoxyribonucleoside 5'-triphosphate + ADP. The enzyme catalyses a ribonucleoside 5'-diphosphate + ATP = a ribonucleoside 5'-triphosphate + ADP. Functionally, major role in the synthesis of nucleoside triphosphates other than ATP. The ATP gamma phosphate is transferred to the NDP beta phosphate via a ping-pong mechanism, using a phosphorylated active-site intermediate. The sequence is that of Nucleoside diphosphate kinase from Actinobacillus pleuropneumoniae serotype 5b (strain L20).